A 245-amino-acid polypeptide reads, in one-letter code: Carbohydrate deacetylase (245 aa).

2 residues coordinate Mg(2+): His61 and His122.

Belongs to the YdjC deacetylase family. It depends on Mg(2+) as a cofactor.

Probably catalyzes the deacetylation of acetylated carbohydrates an important step in the degradation of oligosaccharides. This chain is Carbohydrate deacetylase (celC), found in Geobacillus stearothermophilus (Bacillus stearothermophilus).